The sequence spans 124 residues: Small ribosomal subunit protein uS12 (124 aa).

A 3-methylthioaspartic acid modification is found at Asp89. The interval 102 to 124 is disordered; the sequence is LDTSGVNNRKHGRSKYGTKRPKS. Residues 109–124 are compositionally biased toward basic residues; that stretch reads NRKHGRSKYGTKRPKS.

Belongs to the universal ribosomal protein uS12 family. In terms of assembly, part of the 30S ribosomal subunit. Contacts proteins S8 and S17. May interact with IF1 in the 30S initiation complex.

Functionally, with S4 and S5 plays an important role in translational accuracy. Interacts with and stabilizes bases of the 16S rRNA that are involved in tRNA selection in the A site and with the mRNA backbone. Located at the interface of the 30S and 50S subunits, it traverses the body of the 30S subunit contacting proteins on the other side and probably holding the rRNA structure together. The combined cluster of proteins S8, S12 and S17 appears to hold together the shoulder and platform of the 30S subunit. The polypeptide is Small ribosomal subunit protein uS12 (Francisella philomiragia subsp. philomiragia (strain ATCC 25017 / CCUG 19701 / FSC 153 / O#319-036)).